We begin with the raw amino-acid sequence, 391 residues long: Pectin acetylesterase 11 (391 aa).

A signal peptide spans 1-23; that stretch reads MTWLKQMWSSILVLAVVVIGARA. Active-site charge relay system residues include Ser-171, Asp-267, and His-334.

The protein belongs to the pectinacetylesterase family.

Its subcellular location is the secreted. It is found in the cell wall. Functionally, hydrolyzes acetyl esters in homogalacturonan regions of pectin. In type I primary cell wall, galacturonic acid residues of pectin can be acetylated at the O-2 and O-3 positions. Decreasing the degree of acetylation of pectin gels in vitro alters their physical properties. The chain is Pectin acetylesterase 11 from Arabidopsis thaliana (Mouse-ear cress).